Here is a 139-residue protein sequence, read N- to C-terminus: Arsenate reductase (139 aa).

Residues Cys10, Cys82, and Cys89 each act as nucleophile in the active site. 2 disulfide bridges follow: Cys10–Cys82 and Cys82–Cys89.

Belongs to the low molecular weight phosphotyrosine protein phosphatase family. Thioredoxin-coupled ArsC subfamily.

The protein resides in the cytoplasm. The catalysed reaction is arsenate + [thioredoxin]-dithiol + H(+) = arsenite + [thioredoxin]-disulfide + H2O. Functionally, catalyzes the reduction of arsenate [As(V)] to arsenite [As(III)]. This is Arsenate reductase from Oceanobacillus iheyensis (strain DSM 14371 / CIP 107618 / JCM 11309 / KCTC 3954 / HTE831).